The chain runs to 268 residues: Ubiquinone biosynthesis protein COQ4 homolog, mitochondrial (268 aa).

Residues 1 to 25 constitute a mitochondrion transit peptide; it reads MMQRCLRLQKPLALRRGLHLAQVNS. Residues His171, Asp172, His175, and Glu187 each coordinate Zn(2+).

Belongs to the COQ4 family. Component of a multi-subunit COQ enzyme complex. The cofactor is Zn(2+).

It localises to the mitochondrion inner membrane. The enzyme catalyses a 4-hydroxy-3-methoxy-5-(all-trans-polyprenyl)benzoate + H(+) = a 2-methoxy-6-(all-trans-polyprenyl)phenol + CO2. Its pathway is cofactor biosynthesis; ubiquinone biosynthesis. Its function is as follows. Lyase that catalyzes the C1-decarboxylation of 4-hydroxy-3-methoxy-5-(all-trans-polyprenyl)benzoic acid into 2-methoxy-6-(all-trans-polyprenyl)phenol during ubiquinone biosynthesis. The chain is Ubiquinone biosynthesis protein COQ4 homolog, mitochondrial from Drosophila simulans (Fruit fly).